The chain runs to 291 residues: Polyamine aminopropyltransferase (291 aa).

The PABS domain maps to 5-245 (PGPISLIEPL…YAVNYILGSL (241 aa)). An S-methyl-5'-thioadenosine-binding site is contributed by glutamine 36. The spermidine site is built by histidine 67 and glutamate 91. Residues aspartate 111 and 143–144 (DG) contribute to the S-methyl-5'-thioadenosine site. Aspartate 164 (proton acceptor) is an active-site residue.

The protein belongs to the spermidine/spermine synthase family. In terms of assembly, homodimer or homotetramer.

The protein resides in the cytoplasm. It carries out the reaction S-adenosyl 3-(methylsulfanyl)propylamine + putrescine = S-methyl-5'-thioadenosine + spermidine + H(+). Its pathway is amine and polyamine biosynthesis; spermidine biosynthesis; spermidine from putrescine: step 1/1. Its function is as follows. Catalyzes the irreversible transfer of a propylamine group from the amino donor S-adenosylmethioninamine (decarboxy-AdoMet) to putrescine (1,4-diaminobutane) to yield spermidine. This chain is Polyamine aminopropyltransferase, found in Pyrobaculum neutrophilum (strain DSM 2338 / JCM 9278 / NBRC 100436 / V24Sta) (Thermoproteus neutrophilus).